The sequence spans 204 residues: Protein G1-like5 (204 aa).

Disordered regions lie at residues 1–45 (MEFV…ESQK) and 157–204 (RARG…GAAA). Residues 26-39 (TGATSASAAGASPS) are compositionally biased toward low complexity. One can recognise an ALOG domain in the interval 40–167 (RYESQKRRDW…ARGVSYEKKK (128 aa)). Residues 165–169 (KKKRK) carry the Nuclear localization signal motif.

Belongs to the plant homeotic and developmental regulators ALOG protein family.

It localises to the nucleus. Probable transcription regulator that acts as a developmental regulator by promoting cell growth in response to light. The sequence is that of Protein G1-like5 (G1L5) from Oryza sativa subsp. japonica (Rice).